We begin with the raw amino-acid sequence, 420 residues long: Phosphatidylinositol 5-phosphate 4-kinase type-2 gamma (420 aa).

Position 2 is an N-acetylalanine (A2). S26 is modified (phosphoserine). The PIPK domain occupies 43 to 419; the sequence is AADPLVGVFL…RFLDFISNIF (377 aa). A required for interaction with PIP5K1A region spans residues 69–75; the sequence is VMLLPDD. S349 bears the Phosphoserine mark.

In terms of assembly, interacts with PIP5K1A; the interaction inhibits PIP5K1A kinase activity. Phosphorylated, phosphorylation is induced by EGF. Widely expressed, with the most abundant expression in kidney.

Its subcellular location is the endoplasmic reticulum. The protein localises to the cytoplasm. The catalysed reaction is a 1,2-diacyl-sn-glycero-3-phospho-(1D-myo-inositol-5-phosphate) + ATP = a 1,2-diacyl-sn-glycero-3-phospho-(1D-myo-inositol-4,5-bisphosphate) + ADP + H(+). The enzyme catalyses 1,2-dihexadecanoyl-sn-glycero-3-phospho-(1D-myo-inositol-5-phosphate) + ATP = 1,2-dihexadecanoyl-sn-glycero-3-phospho-(1D-myo-inositol-4,5-bisphosphate) + ADP + H(+). It catalyses the reaction 1,2-dihexadecanoyl-sn-glycero-3-phospho-(1D-myo-inositol-5-phosphate) + GTP = 1,2-dihexadecanoyl-sn-glycero-3-phospho-(1D-myo-inositol-4,5-bisphosphate) + GDP + H(+). Functionally, phosphatidylinositol 5-phosphate 4-kinase with low enzymatic activity. May be a GTP sensor, has higher GTP-dependent kinase activity than ATP-dependent kinase activity. PIP4Ks negatively regulate insulin signaling through a catalytic-independent mechanism. They interact with PIP5Ks and suppress PIP5K-mediated PtdIns(4,5)P2 synthesis and insulin-dependent conversion to PtdIns(3,4,5)P3. The sequence is that of Phosphatidylinositol 5-phosphate 4-kinase type-2 gamma from Rattus norvegicus (Rat).